Reading from the N-terminus, the 224-residue chain is Viral late gene transcription factor 3 (224 aa).

The segment at 6–26 (CSGCRHNGIVSEQGYEYCIFC) is a zinc-finger region.

The protein belongs to the orthopoxvirus VLTF-3/OPG127 family. As to quaternary structure, interacts with the late transcription elongation factor VLTF-4/OPG110. Interacts with the late transcription factors VLTF-1/OPG093.

In terms of biological role, acts with RNA polymerase to initiate transcription from late gene promoters. In Vaccinia virus (strain Ankara) (VACV), this protein is Viral late gene transcription factor 3 (OPG127).